Here is an 89-residue protein sequence, read N- to C-terminus: Small ribosomal subunit protein bS20 (89 aa).

2 stretches are compositionally biased toward basic residues: residues 1–10 and 17–29; these read MANIKSKIKS and ARKR…SRVK. Residues 1–29 form a disordered region; the sequence is MANIKSKIKSIKTMEKARKRNSMIKSRVK.

This sequence belongs to the bacterial ribosomal protein bS20 family.

Functionally, binds directly to 16S ribosomal RNA. The sequence is that of Small ribosomal subunit protein bS20 from Mycoplasmopsis pulmonis (strain UAB CTIP) (Mycoplasma pulmonis).